An 84-amino-acid chain; its full sequence is Exodeoxyribonuclease 7 small subunit (84 aa).

The protein belongs to the XseB family. In terms of assembly, heterooligomer composed of large and small subunits.

The protein localises to the cytoplasm. The enzyme catalyses Exonucleolytic cleavage in either 5'- to 3'- or 3'- to 5'-direction to yield nucleoside 5'-phosphates.. Its function is as follows. Bidirectionally degrades single-stranded DNA into large acid-insoluble oligonucleotides, which are then degraded further into small acid-soluble oligonucleotides. This chain is Exodeoxyribonuclease 7 small subunit, found in Caulobacter vibrioides (strain ATCC 19089 / CIP 103742 / CB 15) (Caulobacter crescentus).